Reading from the N-terminus, the 558-residue chain is Oligo-1,6-glucosidase (558 aa).

Ca(2+) contacts are provided by Asp21, Asn23, Asp25, and Asp29. The Nucleophile role is filled by Asp199. The active-site Proton donor is Glu255.

This sequence belongs to the glycosyl hydrolase 13 family.

The protein localises to the cytoplasm. The catalysed reaction is Hydrolysis of (1-&gt;6)-alpha-D-glucosidic linkages in some oligosaccharides produced from starch and glycogen by alpha-amylase, and in isomaltose.. The polypeptide is Oligo-1,6-glucosidase (malL) (Bacillus cereus).